The primary structure comprises 138 residues: Ribosome-binding factor A (138 aa).

It belongs to the RbfA family. As to quaternary structure, monomer. Binds 30S ribosomal subunits, but not 50S ribosomal subunits or 70S ribosomes.

It localises to the cytoplasm. Functionally, one of several proteins that assist in the late maturation steps of the functional core of the 30S ribosomal subunit. Associates with free 30S ribosomal subunits (but not with 30S subunits that are part of 70S ribosomes or polysomes). Required for efficient processing of 16S rRNA. May interact with the 5'-terminal helix region of 16S rRNA. This Sodalis glossinidius (strain morsitans) protein is Ribosome-binding factor A.